A 170-amino-acid polypeptide reads, in one-letter code: Protein AIG2 A (170 aa).

15 to 20 (YGSFQE) contributes to the substrate binding site. Glutamate 83 serves as the catalytic Proton acceptor. The span at 147-162 (KNPNGRSREEFEKFVQ) shows a compositional bias: basic and acidic residues. The disordered stretch occupies residues 147–170 (KNPNGRSREEFEKFVQDDSSPASA).

The protein belongs to the gamma-glutamylcyclotransferase family. In terms of tissue distribution, ubiquitous.

Functionally, putative gamma-glutamylcyclotransferase. This chain is Protein AIG2 A, found in Arabidopsis thaliana (Mouse-ear cress).